A 95-amino-acid polypeptide reads, in one-letter code: Small ribosomal subunit protein bS18 (95 aa).

The protein belongs to the bacterial ribosomal protein bS18 family. Part of the 30S ribosomal subunit. Forms a tight heterodimer with protein bS6.

Binds as a heterodimer with protein bS6 to the central domain of the 16S rRNA, where it helps stabilize the platform of the 30S subunit. The sequence is that of Small ribosomal subunit protein bS18 from Ehrlichia ruminantium (strain Gardel).